Here is a 414-residue protein sequence, read N- to C-terminus: Glutamyl-tRNA reductase (414 aa).

Substrate is bound by residues Thr51–Arg54, Ser107, Glu112–Glu114, and Gln118. Cys52 serves as the catalytic Nucleophile. Residue Gly187–Gly192 coordinates NADP(+).

The protein belongs to the glutamyl-tRNA reductase family. As to quaternary structure, homodimer.

It carries out the reaction (S)-4-amino-5-oxopentanoate + tRNA(Glu) + NADP(+) = L-glutamyl-tRNA(Glu) + NADPH + H(+). It functions in the pathway porphyrin-containing compound metabolism; protoporphyrin-IX biosynthesis; 5-aminolevulinate from L-glutamyl-tRNA(Glu): step 1/2. Functionally, catalyzes the NADPH-dependent reduction of glutamyl-tRNA(Glu) to glutamate 1-semialdehyde (GSA). The protein is Glutamyl-tRNA reductase of Sulfolobus acidocaldarius (strain ATCC 33909 / DSM 639 / JCM 8929 / NBRC 15157 / NCIMB 11770).